A 128-amino-acid chain; its full sequence is Large ribosomal subunit protein bL12 (128 aa).

It belongs to the bacterial ribosomal protein bL12 family. As to quaternary structure, homodimer. Part of the ribosomal stalk of the 50S ribosomal subunit. Forms a multimeric L10(L12)X complex, where L10 forms an elongated spine to which 2 to 4 L12 dimers bind in a sequential fashion. Binds GTP-bound translation factors.

Its function is as follows. Forms part of the ribosomal stalk which helps the ribosome interact with GTP-bound translation factors. Is thus essential for accurate translation. The polypeptide is Large ribosomal subunit protein bL12 (Desulfovibrio desulfuricans (strain ATCC 27774 / DSM 6949 / MB)).